Here is a 280-residue protein sequence, read N- to C-terminus: Putative transcription factor kapC (280 aa).

Positions 1–102 (MQPALAPHPS…GKRPLSTSKR (102 aa)) are disordered. A compositionally biased stretch (pro residues) spans 39–49 (PQPPAPQPPHM). Positions 79 to 89 (TQPDVTGQETP) are enriched in polar residues. Positions 96 to 159 (PLSTSKRAAQ…EYIINLQSRL (64 aa)) constitute a bZIP domain. The basic motif stretch occupies residues 97-120 (LSTSKRAAQNRAAQRAFRQRKEAH). Residues 124 to 155 (LEGKVKAYESMGEAIKALQAENYQLREYIINL) form a leucine-zipper region. Positions 169–280 (LPGNIDLSQP…EQTHGLPLIS (112 aa)) are disordered. The segment covering 197–206 (APPPTAPQQP) has biased composition (pro residues).

It belongs to the bZIP family.

Its subcellular location is the nucleus. Putative transcription factor. The sequence is that of Putative transcription factor kapC (kapC) from Aspergillus fumigatus (strain ATCC MYA-4609 / CBS 101355 / FGSC A1100 / Af293) (Neosartorya fumigata).